The chain runs to 25 residues: Zinc metalloproteinase-disintegrin-like daborhagin-M (25 aa).

Residues Ser-14–Ser-25 enclose the Peptidase M12B domain. Glu-17 serves as a coordination point for Ca(2+).

It belongs to the venom metalloproteinase (M12B) family. P-III subfamily. P-IIIa sub-subfamily. Monomer. The cofactor is Zn(2+). In terms of processing, N-glycosylated. Contains 16 disulfide bonds. As to expression, expressed by the venom gland.

The protein resides in the secreted. Inhibited by EDTA, EGTA and 1,10-phenanthroline. Addition of Mg(2+) or Ca(2+) increases the casein hydrolysis rate. In terms of biological role, snake venom zinc metalloprotease that possesses high hemorrhagic activity (minimum hemorrhagic dose, MHD=0.86 ug) when subcutaneously injected into mice. Has potent fibrinogenolytic activity on alpha-chain of fibrinogen (FGA). Hydrolyzes model substrate (beta-chain of insulin) at Ala(14)-Leu(15) and Tyr(16)-Leu(17) followed by His(10)-Leu(11) and Phe(24)-Phe(25). This Daboia siamensis (Eastern Russel's viper) protein is Zinc metalloproteinase-disintegrin-like daborhagin-M.